The primary structure comprises 619 residues: ATP-dependent RNA helicase DBP8 (619 aa).

A disordered region spans residues Met1–Ser149. A compositionally biased stretch (acidic residues) spans Glu46–Glu67. Positions Ser68–Ala78 are enriched in low complexity. The segment covering Leu93 to Glu105 has biased composition (acidic residues). The span at Pro137–Lys147 shows a compositional bias: polar residues. The short motif at Val152–Ala180 is the Q motif element. The Helicase ATP-binding domain maps to Val183–Arg356. Ala196–Thr203 provides a ligand contact to ATP. A DEAD box motif is present at residues Asp304 to Asp307. The segment at Glu414–Pro436 is disordered. The Helicase C-terminal domain maps to Lys430 to Leu572.

Belongs to the DEAD box helicase family. DDX49/DBP8 subfamily.

It localises to the nucleus. The protein resides in the nucleolus. It catalyses the reaction ATP + H2O = ADP + phosphate + H(+). In terms of biological role, ATP-binding RNA helicase involved in 40S ribosomal subunit biogenesis and is required for the normal formation of 18S rRNAs through pre-rRNA processing at A0, A1 and A2 sites. Required for vegetative growth. In Cryptococcus neoformans var. neoformans serotype D (strain B-3501A) (Filobasidiella neoformans), this protein is ATP-dependent RNA helicase DBP8 (DBP8).